The chain runs to 444 residues: MKKLLSRTSETHPLTWRLNAQQDTVWIKEYKRKNGYRAFEKVVNHMTSEDVIDLIKQSGLKGRGGAGFLTGLKWSLMPPLNDEYGYTRYLLCNADEMEPGTYKDRFLMEKVPHQLLEGILISAFALSVTKSYIFLRGEYVNTERILKQSIIEATNYGYLGKNVCGSNLTFEIFIHTGAGRYICGEETALINSLEGRRANPRFKPPFPAYVGLWGKPTCVNNVETLSNVPAIFLNGVKWYKGLSKSLDTGTKMMGFSGSVKFPGIWELPFGITAREIFERYAGGMKNNKKLKVWQPGGASTSFLIDKHLDVPMDFVNIKKVGSRLGTALAMAVDDSVSIVSLVRNIEEFFSRESCGFCTPCRDGLPWIVKILKVLEQKIGVPEDIEILEQLCEQLGPGRTFCAHAPGAIEPLKSALKYFRLEFELCVNSNSTIKCKYIHSSISEY.

Residue 62–71 (GRGGAGFLTG) coordinates NAD(+). Position 177–224 (177–224 (GAGRYICGEETALINSLEGRRANPRFKPPFPAYVGLWGKPTCVNNVET)) interacts with FMN. [4Fe-4S] cluster-binding residues include Cys-354, Cys-357, Cys-360, and Cys-401.

Belongs to the complex I 51 kDa subunit family. Composed of 13 different subunits. Subunits NuoCD, E, F, and G constitute the peripheral sector of the complex. Requires [4Fe-4S] cluster as cofactor. FMN serves as cofactor.

It catalyses the reaction a quinone + NADH + 5 H(+)(in) = a quinol + NAD(+) + 4 H(+)(out). NDH-1 shuttles electrons from NADH, via FMN and iron-sulfur (Fe-S) centers, to quinones in the respiratory chain. Couples the redox reaction to proton translocation (for every two electrons transferred, four hydrogen ions are translocated across the cytoplasmic membrane), and thus conserves the redox energy in a proton gradient. This is NADH-quinone oxidoreductase subunit F (nuoF) from Buchnera aphidicola subsp. Baizongia pistaciae (strain Bp).